The primary structure comprises 225 residues: Cytochrome c oxidase subunit 2 (225 aa).

The Mitochondrial intermembrane segment spans residues 1–25 (MSTWFMFMFQESNSYYADNLISFHN). A helical transmembrane segment spans residues 26–47 (MVMMIIIMISTLTVYIILDLFM). At 48 to 62 (NKFSNLFLLKNHNIE) the chain is on the mitochondrial matrix side. Residues 63 to 82 (IIWTIIPIIILLIICFPSLK) traverse the membrane as a helical segment. The Mitochondrial intermembrane segment spans residues 83–225 (ILYLIDEIVN…YFLNWVNKQI (143 aa)). The Cu cation site is built by His-159, Cys-194, Glu-196, Cys-198, His-202, and Met-205. Glu-196 serves as a coordination point for Mg(2+).

Belongs to the cytochrome c oxidase subunit 2 family. As to quaternary structure, component of the cytochrome c oxidase (complex IV, CIV), a multisubunit enzyme composed of a catalytic core of 3 subunits and several supernumerary subunits. The complex exists as a monomer or a dimer and forms supercomplexes (SCs) in the inner mitochondrial membrane with ubiquinol-cytochrome c oxidoreductase (cytochrome b-c1 complex, complex III, CIII). Cu cation serves as cofactor.

It is found in the mitochondrion inner membrane. It carries out the reaction 4 Fe(II)-[cytochrome c] + O2 + 8 H(+)(in) = 4 Fe(III)-[cytochrome c] + 2 H2O + 4 H(+)(out). In terms of biological role, component of the cytochrome c oxidase, the last enzyme in the mitochondrial electron transport chain which drives oxidative phosphorylation. The respiratory chain contains 3 multisubunit complexes succinate dehydrogenase (complex II, CII), ubiquinol-cytochrome c oxidoreductase (cytochrome b-c1 complex, complex III, CIII) and cytochrome c oxidase (complex IV, CIV), that cooperate to transfer electrons derived from NADH and succinate to molecular oxygen, creating an electrochemical gradient over the inner membrane that drives transmembrane transport and the ATP synthase. Cytochrome c oxidase is the component of the respiratory chain that catalyzes the reduction of oxygen to water. Electrons originating from reduced cytochrome c in the intermembrane space (IMS) are transferred via the dinuclear copper A center (CU(A)) of subunit 2 and heme A of subunit 1 to the active site in subunit 1, a binuclear center (BNC) formed by heme A3 and copper B (CU(B)). The BNC reduces molecular oxygen to 2 water molecules using 4 electrons from cytochrome c in the IMS and 4 protons from the mitochondrial matrix. In Apis mellifera ligustica (Common honeybee), this protein is Cytochrome c oxidase subunit 2 (COII).